A 74-amino-acid chain; its full sequence is Cytochrome b559 subunit alpha (74 aa).

The chain crosses the membrane as a helical span at residues 22–36 (VIHTVTIPSLFVAGW). Position 24 (His24) interacts with heme.

The protein belongs to the PsbE/PsbF family. Heterodimer of an alpha subunit and a beta subunit. PSII is composed of 1 copy each of membrane proteins PsbA, PsbB, PsbC, PsbD, PsbE, PsbF, PsbH, PsbI, PsbJ, PsbK, PsbL, PsbM, PsbT, PsbX, PsbY, PsbZ, Psb30/Ycf12, at least 3 peripheral proteins of the oxygen-evolving complex and a large number of cofactors. It forms dimeric complexes. Heme b serves as cofactor.

Its subcellular location is the plastid. It is found in the cyanelle thylakoid membrane. This b-type cytochrome is tightly associated with the reaction center of photosystem II (PSII). PSII is a light-driven water:plastoquinone oxidoreductase that uses light energy to abstract electrons from H(2)O, generating O(2) and a proton gradient subsequently used for ATP formation. It consists of a core antenna complex that captures photons, and an electron transfer chain that converts photonic excitation into a charge separation. The sequence is that of Cytochrome b559 subunit alpha from Cyanophora paradoxa.